Consider the following 519-residue polypeptide: Chaperone SurA (519 aa).

An N-terminal signal peptide occupies residues 1–31; it reads MMRSLHSLRRMSGTVLALMLAAGLPLSAAQA. Low complexity-rich tracts occupy residues 31–45 and 197–207; these read AQPA…QKPA and PAAAQATRAPA. Disordered regions lie at residues 31–50 and 196–221; these read AQPA…PAPS and NPAA…PAQS. A PpiC 1 domain is found at 223 to 324; the sequence is PAMLVLAQIL…NGFHILKVVD (102 aa). The segment at 328 to 361 is disordered; it reads GGQPAQAARPAPAPAPQQPSSFQEGPSVAAPQGP. The 100-residue stretch at 364 to 463 folds into the PpiC 2 domain; the sequence is VTQTHARHIL…FGWHLIQVLE (100 aa).

The protein localises to the periplasm. The enzyme catalyses [protein]-peptidylproline (omega=180) = [protein]-peptidylproline (omega=0). Chaperone involved in the correct folding and assembly of outer membrane proteins. Recognizes specific patterns of aromatic residues and the orientation of their side chains, which are found more frequently in integral outer membrane proteins. May act in both early periplasmic and late outer membrane-associated steps of protein maturation. The sequence is that of Chaperone SurA from Bordetella pertussis (strain Tohama I / ATCC BAA-589 / NCTC 13251).